We begin with the raw amino-acid sequence, 377 residues long: SLIDTGASRTWVFGSDCTSKSCGAHNTFGKEDSKTIKVTDEKWDVAYGTGKVAGVIVNDTMSFAGFELDTPFGSATTASDDFMSYPMDGILGIGPQDSKAKVPTVIQLLMQQKLLKSNIIGINLQRNSDGATDGQITFGDVDKSKFSGELAYSNVVSGGYQWEIAVDDIIVDGKPLNFQGRSGIVDTGTSFLLLPPDDADLIHSKIPKSAKSSVFYTVPCSTTTNIELSISGVKYAIKPKDYVGYESTTKGICNSLIIGRQAIGPKQWLLGDVFLKNVYSVYDFDKNRVGLAARKYGETKDPPSSSHPPPAPTSNKASGGSPGLPEQSGTSSATTSTTGEPSSGSTASPSAASSVSMSAWLSLAVFLSTASSLILWD.

The 292-residue stretch at serine 1–alanine 292 folds into the Peptidase A1 domain. Residue aspartate 4 is part of the active site. Asparagine 58 carries an N-linked (GlcNAc...) asparagine glycan. Aspartate 186 is an active-site residue. A disordered region spans residues tyrosine 296–alanine 351. Low complexity predominate over residues serine 328–alanine 351. Residue serine 350 is the site of GPI-anchor amidated serine attachment. A propeptide spans alanine 351–aspartate 377 (removed in mature form).

The protein belongs to the peptidase A1 family.

The protein resides in the cell membrane. In terms of biological role, secreted aspartic-type endopeptidase which is secreted and contributes to virulence. The polypeptide is Probable aspartic-type endopeptidase CTSD (CTSD) (Arthroderma otae (strain ATCC MYA-4605 / CBS 113480) (Microsporum canis)).